The sequence spans 300 residues: Tyrosine recombinase XerC (300 aa).

The 87-residue stretch at 4 to 90 (VALSLDVSRF…ALRSFFDWLV (87 aa)) folds into the Core-binding (CB) domain. In terms of domain architecture, Tyr recombinase spans 111-290 (HLPKNIDVDD…DFQHLASVYD (180 aa)). Residues R150, K174, H242, R245, and H268 contribute to the active site. The O-(3'-phospho-DNA)-tyrosine intermediate role is filled by Y277.

The protein belongs to the 'phage' integrase family. XerC subfamily. As to quaternary structure, forms a cyclic heterotetrameric complex composed of two molecules of XerC and two molecules of XerD, in which XerC interacts with XerD via its C-terminal region, XerD interacts with XerC via its C-terminal region and so on.

Its subcellular location is the cytoplasm. With respect to regulation, ftsK may regulate the catalytic switch between XerC and XerD in the heterotetrameric complex during the two steps of the recombination process. In terms of biological role, site-specific tyrosine recombinase, which acts by catalyzing the cutting and rejoining of the recombining DNA molecules. Binds cooperatively to specific DNA consensus sequences that are separated from XerD binding sites by a short central region, forming the heterotetrameric XerC-XerD complex that recombines DNA substrates. The complex is essential to convert dimers of the bacterial chromosome into monomers to permit their segregation at cell division. It also contributes to the segregational stability of plasmids. In the complex XerC specifically exchanges the top DNA strands. The protein is Tyrosine recombinase XerC of Salmonella typhi.